The chain runs to 61 residues: Small ribosomal subunit protein uS14 (61 aa).

Zn(2+) contacts are provided by Cys-24, Cys-27, Cys-40, and Cys-43.

Belongs to the universal ribosomal protein uS14 family. Zinc-binding uS14 subfamily. Part of the 30S ribosomal subunit. Contacts proteins S3 and S10. It depends on Zn(2+) as a cofactor.

In terms of biological role, binds 16S rRNA, required for the assembly of 30S particles and may also be responsible for determining the conformation of the 16S rRNA at the A site. The protein is Small ribosomal subunit protein uS14 of Streptococcus pyogenes serotype M49 (strain NZ131).